Consider the following 160-residue polypeptide: SsrA-binding protein (160 aa).

This sequence belongs to the SmpB family.

It is found in the cytoplasm. Required for rescue of stalled ribosomes mediated by trans-translation. Binds to transfer-messenger RNA (tmRNA), required for stable association of tmRNA with ribosomes. tmRNA and SmpB together mimic tRNA shape, replacing the anticodon stem-loop with SmpB. tmRNA is encoded by the ssrA gene; the 2 termini fold to resemble tRNA(Ala) and it encodes a 'tag peptide', a short internal open reading frame. During trans-translation Ala-aminoacylated tmRNA acts like a tRNA, entering the A-site of stalled ribosomes, displacing the stalled mRNA. The ribosome then switches to translate the ORF on the tmRNA; the nascent peptide is terminated with the 'tag peptide' encoded by the tmRNA and targeted for degradation. The ribosome is freed to recommence translation, which seems to be the essential function of trans-translation. The polypeptide is SsrA-binding protein (Novosphingobium aromaticivorans (strain ATCC 700278 / DSM 12444 / CCUG 56034 / CIP 105152 / NBRC 16084 / F199)).